A 356-amino-acid chain; its full sequence is 3-isopropylmalate dehydrogenase (356 aa).

Substrate is bound by residues R90, R100, R128, and D222. Residues D222, D246, and D250 each contribute to the Mg(2+) site. 280 to 292 (GSAPDIAGKGVAN) is an NAD(+) binding site.

Belongs to the isocitrate and isopropylmalate dehydrogenases family. LeuB type 1 subfamily. Homodimer. Requires Mg(2+) as cofactor. The cofactor is Mn(2+).

The protein resides in the cytoplasm. It catalyses the reaction (2R,3S)-3-isopropylmalate + NAD(+) = 4-methyl-2-oxopentanoate + CO2 + NADH. Its pathway is amino-acid biosynthesis; L-leucine biosynthesis; L-leucine from 3-methyl-2-oxobutanoate: step 3/4. Its function is as follows. Catalyzes the oxidation of 3-carboxy-2-hydroxy-4-methylpentanoate (3-isopropylmalate) to 3-carboxy-4-methyl-2-oxopentanoate. The product decarboxylates to 4-methyl-2 oxopentanoate. This chain is 3-isopropylmalate dehydrogenase, found in Albidiferax ferrireducens (strain ATCC BAA-621 / DSM 15236 / T118) (Rhodoferax ferrireducens).